Here is a 337-residue protein sequence, read N- to C-terminus: Probable arabinose 5-phosphate isomerase (337 aa).

The SIS domain occupies 58–201; sequence VIDLILACEG…AVSLITARNF (144 aa). Substrate contacts are provided by residues 92-93, H99, H105, 131-140, 165-167, T237, and D290; these read GT, KLIPSLKNFG, and TVE. Residue H99 participates in Zn(2+) binding. The region spanning 227–284 is the CBS 1 domain; sequence MQTRLPTILPTTNFTDCLTVMNEGRMGVALVMENEQLKGIITDGDIRRALTANGAGTL. The CBS 2 domain occupies 292–337; that stretch reads MTSSPKTIHQDEFLSKAEDFMKAKKIHSLVVVNDENHVVGLVEFSS.

This sequence belongs to the SIS family. GutQ/KpsF subfamily.

The catalysed reaction is D-arabinose 5-phosphate = D-ribulose 5-phosphate. Functionally, catalyzes the reversible aldol-ketol isomerization between D-ribulose 5-phosphate (Ru5P) and D-arabinose 5-phosphate (A5P). The polypeptide is Probable arabinose 5-phosphate isomerase (Haemophilus influenzae (strain ATCC 51907 / DSM 11121 / KW20 / Rd)).